A 202-amino-acid chain; its full sequence is Recombination protein RecR (202 aa).

Residues 61–76 (CARCNSFTEDEVCATC) form a C4-type zinc finger. The Toprim domain occupies 84-179 (GLLCIVETPA…KVTRLARGVP (96 aa)).

The protein belongs to the RecR family.

In terms of biological role, may play a role in DNA repair. It seems to be involved in an RecBC-independent recombinational process of DNA repair. It may act with RecF and RecO. The polypeptide is Recombination protein RecR (Bordetella bronchiseptica (strain ATCC BAA-588 / NCTC 13252 / RB50) (Alcaligenes bronchisepticus)).